Here is a 636-residue protein sequence, read N- to C-terminus: 1,4-alpha-glucan branching enzyme GlgB (636 aa).

D309 functions as the Nucleophile in the catalytic mechanism. E362 functions as the Proton donor in the catalytic mechanism.

It belongs to the glycosyl hydrolase 13 family. GlgB subfamily. Monomer.

It carries out the reaction Transfers a segment of a (1-&gt;4)-alpha-D-glucan chain to a primary hydroxy group in a similar glucan chain.. Its pathway is glycan biosynthesis; glycogen biosynthesis. In terms of biological role, catalyzes the formation of the alpha-1,6-glucosidic linkages in glycogen by scission of a 1,4-alpha-linked oligosaccharide from growing alpha-1,4-glucan chains and the subsequent attachment of the oligosaccharide to the alpha-1,6 position. This chain is 1,4-alpha-glucan branching enzyme GlgB, found in Aromatoleum aromaticum (strain DSM 19018 / LMG 30748 / EbN1) (Azoarcus sp. (strain EbN1)).